We begin with the raw amino-acid sequence, 163 residues long: Ribosome maturation factor RimM (163 aa).

The 70-residue stretch at 92–161 folds into the PRC barrel domain; the sequence is PGEYYHHDLI…AETVTVNAAF (70 aa).

It belongs to the RimM family. As to quaternary structure, binds ribosomal protein uS19.

It localises to the cytoplasm. An accessory protein needed during the final step in the assembly of 30S ribosomal subunit, possibly for assembly of the head region. Essential for efficient processing of 16S rRNA. May be needed both before and after RbfA during the maturation of 16S rRNA. It has affinity for free ribosomal 30S subunits but not for 70S ribosomes. The chain is Ribosome maturation factor RimM from Sphingopyxis alaskensis (strain DSM 13593 / LMG 18877 / RB2256) (Sphingomonas alaskensis).